Here is a 206-residue protein sequence, read N- to C-terminus: MARYTGATCRLCRREGMKLFLKGDRCFTDKCAFVRRSYAPGQHGANKKKVSNYGVQLREKQKARRIYGILEGQFRTYYEKAEHIKGITGENLLKLLEMRLDNIVYRLGYGSSRNEARQLVTHGHFLVNGKKVDICSYHVSVNDVITVCEKSRSSEKFKTFVENPKTLPKWLEANVDNYEGKVVAEPSREDIDVPVNETLIVELYSK.

In terms of domain architecture, S4 RNA-binding spans 98–163; the sequence is MRLDNIVYRL…SEKFKTFVEN (66 aa).

The protein belongs to the universal ribosomal protein uS4 family. As to quaternary structure, part of the 30S ribosomal subunit. Contacts protein S5. The interaction surface between S4 and S5 is involved in control of translational fidelity.

Functionally, one of the primary rRNA binding proteins, it binds directly to 16S rRNA where it nucleates assembly of the body of the 30S subunit. With S5 and S12 plays an important role in translational accuracy. The polypeptide is Small ribosomal subunit protein uS4 (Clostridium beijerinckii (strain ATCC 51743 / NCIMB 8052) (Clostridium acetobutylicum)).